Reading from the N-terminus, the 348-residue chain is Protein RecA (348 aa).

64–71 is a binding site for ATP; sequence GPESSGKT. Residues 325–335 are compositionally biased toward basic and acidic residues; the sequence is YEIDGASKEPL. The disordered stretch occupies residues 325–348; that stretch reads YEIDGASKEPLEETEETLSLLDDE. Residues 336-348 are compositionally biased toward acidic residues; that stretch reads EETEETLSLLDDE.

The protein belongs to the RecA family.

Its subcellular location is the cytoplasm. Functionally, can catalyze the hydrolysis of ATP in the presence of single-stranded DNA, the ATP-dependent uptake of single-stranded DNA by duplex DNA, and the ATP-dependent hybridization of homologous single-stranded DNAs. It interacts with LexA causing its activation and leading to its autocatalytic cleavage. The sequence is that of Protein RecA from Listeria seeligeri.